Reading from the N-terminus, the 351-residue chain is Cytochrome c biogenesis protein CcsA (351 aa).

Transmembrane regions (helical) follow at residues 17–37 (VLFL…LPAI), 38–58 (NALG…LLGA), 68–88 (LSNL…VHLI), 97–117 (LVGV…TLTL), 143–163 (MMLS…FLVI), 259–279 (IIGL…VWAN), 286–306 (WSWD…AAYL), and 320–340 (AILA…VNLL).

This sequence belongs to the CcmF/CycK/Ccl1/NrfE/CcsA family. May interact with ccs1.

Its subcellular location is the cellular thylakoid membrane. In terms of biological role, required during biogenesis of c-type cytochromes (cytochrome c6 and cytochrome f) at the step of heme attachment. The sequence is that of Cytochrome c biogenesis protein CcsA from Trichormus variabilis (strain ATCC 29413 / PCC 7937) (Anabaena variabilis).